Here is a 149-residue protein sequence, read N- to C-terminus: Hordoindoline-A (149 aa).

The first 19 residues, 1–19 (MKALFLMGLLALVASAAFA), serve as a signal peptide directing secretion. Residues 20–28 (QYGEVVGSY) constitute a propeptide that is removed on maturation. A propeptide spans 148-149 (YW) (removed in mature form).

In terms of processing, five disulfide bonds are present. In terms of tissue distribution, found in endosperm and aleurone layer of developing kernels, but not in the embryo.

It is found in the membrane. Its subcellular location is the secreted. The protein localises to the extracellular space. Its function is as follows. Acts as a membranotoxin, probably through its antibacterial and antifungal activities, contributing to the defense mechanism of the plant against predators. Forms monovalent cation-selective ion channels in membranes. Contributes to grain texture and hardness. The polypeptide is Hordoindoline-A (HINA) (Hordeum vulgare (Barley)).